The chain runs to 850 residues: Pierisin (850 aa).

Ricin B-type lectin domains are found at residues 267–409 (GEFM…WNII), 413–560 (FRPI…WDIK), and 564–707 (YQYV…WYLK).

It belongs to the pierisin ADP-ribosyltransferase family.

The catalysed reaction is a 2'-deoxyguanosine in DNA + NAD(+) = an N(2)-(ADP-L-ribosyl)-2'-deoxyguanosine in DNA + nicotinamide + H(+). Functionally, ADP-ribosylates double-stranded DNA by targeting the N2 amino group of dG residues. Induces apoptosis in a range of human cell lines. May play a role in destroying cells during pupation and/or defense against parasites. The polypeptide is Pierisin (Pieris brassicae (White butterfly)).